The following is a 277-amino-acid chain: Small ribosomal subunit protein uS2 (277 aa).

Residues 247–277 (LSAFESSQDDESDEENREEDLLAKKFDGEAN) form a disordered region. Over residues 253–264 (SQDDESDEENRE) the composition is skewed to acidic residues. Residues 265–277 (EDLLAKKFDGEAN) are compositionally biased toward basic and acidic residues.

Belongs to the universal ribosomal protein uS2 family.

In Chlamydia pneumoniae (Chlamydophila pneumoniae), this protein is Small ribosomal subunit protein uS2 (rpsB).